Here is a 1068-residue protein sequence, read N- to C-terminus: WD repeat-containing protein on Y chromosome (1068 aa).

WD repeat units follow at residues 155–199 (DEVT…IRTA), 201–242 (SESI…RGPF), 322–361 (RIPL…EPSA), 365–404 (GHNG…LLQT), 455–494 (THAA…RKII), 507–546 (IIDI…VVRN), and 594–634 (FHTD…RRYS). Positions 657–687 (SKRLASRPTPGNHGLQMGRAGRSTVLNRPED) are disordered. 2 WD repeats span residues 746-785 (KTGD…VPET) and 829-868 (GHLK…LGTL). The interval 1026–1068 (SAINIKQPSRRRSDKTNDTRNVRTPRARDLIALEMSSSHASQS) is disordered. Basic and acidic residues predominate over residues 1039–1056 (DKTNDTRNVRTPRARDLI).

The chain is WD repeat-containing protein on Y chromosome from Drosophila yakuba (Fruit fly).